The sequence spans 512 residues: MRIIPRTMCTQHPDYANVPQWVVNDFIKGDDEVYEAYMNYSIYDCQETMWDFEGKDVDIYVVRKLLENYGGFFINKVLGEDIYLTYRLPNPNVEASDRKIFAEALETIPMAYDLARVFYGKPVKAIFEVIFPLTSSSRDLIMTLRYYERIVAGKCSVELDDGLKVSDVIGEVEPKTIEVIPLVEDMESLVRIDSIIEGYVKVAKPQYLRVFIARSDPAMNYGLIPAVLLAKIALSRVYAIGNSLGLSIYPIIGVGPTPFRGNFNPRNVNNTLKEYPGVYTFTVQSAFRYDYPVDNAKDAINLINNSKPTEPVILSSDEEELALTIIRQYTDRYQAEVEGLANAVNYIAQLLPPRRTRRLHIGLFGYGRGFRGVTLPRAIAFVGALYSIGIPPEILGLSTLLKLNERQWGVLEGNYVNLWSDLSDAAQYICMECIEQLPSMKSELRVSKETIAMVLEDIKAIDELGVKVSSPGFEQRKHALLTKLFLESVNNSYINDAKAYLLDMAKVRRAIG.

Belongs to the PEPCase type 2 family. In terms of assembly, homotetramer. Mg(2+) is required as a cofactor.

The catalysed reaction is oxaloacetate + phosphate = phosphoenolpyruvate + hydrogencarbonate. Catalyzes the irreversible beta-carboxylation of phosphoenolpyruvate (PEP) to form oxaloacetate (OAA), a four-carbon dicarboxylic acid source for the tricarboxylic acid cycle. The protein is Phosphoenolpyruvate carboxylase of Caldivirga maquilingensis (strain ATCC 700844 / DSM 13496 / JCM 10307 / IC-167).